The primary structure comprises 418 residues: Geranylgeranyl pyrophosphate synthase (418 aa).

A compositionally biased stretch (polar residues) spans 51 to 64 (TSSTGIPTSLNATP). The disordered stretch occupies residues 51-73 (TSSTGIPTSLNATPTKPVLRPVP). Residues Lys-143, Arg-146, and His-175 each contribute to the isopentenyl diphosphate site. 2 residues coordinate Mg(2+): Asp-182 and Asp-186. Arg-191 is a dimethylallyl diphosphate binding site. Arg-192 provides a ligand contact to isopentenyl diphosphate. Dimethylallyl diphosphate contacts are provided by Lys-269, Thr-270, Gln-305, Lys-322, and Lys-332.

This sequence belongs to the FPP/GGPP synthase family. The cofactor is Mg(2+).

Its subcellular location is the cytoplasm. It catalyses the reaction isopentenyl diphosphate + dimethylallyl diphosphate = (2E)-geranyl diphosphate + diphosphate. The enzyme catalyses isopentenyl diphosphate + (2E)-geranyl diphosphate = (2E,6E)-farnesyl diphosphate + diphosphate. It carries out the reaction isopentenyl diphosphate + (2E,6E)-farnesyl diphosphate = (2E,6E,10E)-geranylgeranyl diphosphate + diphosphate. Its pathway is isoprenoid biosynthesis; farnesyl diphosphate biosynthesis; farnesyl diphosphate from geranyl diphosphate and isopentenyl diphosphate: step 1/1. It functions in the pathway isoprenoid biosynthesis; geranyl diphosphate biosynthesis; geranyl diphosphate from dimethylallyl diphosphate and isopentenyl diphosphate: step 1/1. The protein operates within isoprenoid biosynthesis; geranylgeranyl diphosphate biosynthesis; geranylgeranyl diphosphate from farnesyl diphosphate and isopentenyl diphosphate: step 1/1. Its function is as follows. Catalyzes the trans-addition of the three molecules of IPP onto DMAPP to form geranylgeranyl pyrophosphate. This is Geranylgeranyl pyrophosphate synthase (GGS) from Fusarium fujikuroi (Bakanae and foot rot disease fungus).